The following is a 542-amino-acid chain: Peptide chain release factor 3 (542 aa).

One can recognise a tr-type G domain in the interval 14 to 283 (ERRRNFAIIS…AFLDYALKPA (270 aa)). GTP is bound by residues 23-30 (SHPDAGKT), 91-95 (DTPGH), and 145-148 (NKLD).

The protein belongs to the TRAFAC class translation factor GTPase superfamily. Classic translation factor GTPase family. PrfC subfamily.

Its subcellular location is the cytoplasm. Increases the formation of ribosomal termination complexes and stimulates activities of RF-1 and RF-2. It binds guanine nucleotides and has strong preference for UGA stop codons. It may interact directly with the ribosome. The stimulation of RF-1 and RF-2 is significantly reduced by GTP and GDP, but not by GMP. In Cyanothece sp. (strain PCC 7425 / ATCC 29141), this protein is Peptide chain release factor 3.